The sequence spans 477 residues: Probable F-box protein At5g25300 (477 aa).

Residues 346 to 377 (VDMNKEDSQIEINEKETKINQEHDQSDETQAK) are a coiled coil. Residues 412–458 (SPPWSELPGDILRSVFERLSFVDFQRAKQTCPIKRSKSNCLRLWLIT) enclose the F-box domain.

This Arabidopsis thaliana (Mouse-ear cress) protein is Probable F-box protein At5g25300.